The sequence spans 176 residues: Macro domain-containing protein lmo2759 (176 aa).

The region spanning Met1–Val175 is the Macro domain.

This sequence belongs to the MacroD-type family.

This Listeria monocytogenes serovar 1/2a (strain ATCC BAA-679 / EGD-e) protein is Macro domain-containing protein lmo2759.